The primary structure comprises 129 residues: Large ribosomal subunit protein mL53 (129 aa).

Residues 1 to 50 (MREKLNLLAKLKSVVYKFDPLNPNTRSIRSFIPLTTCKRSRQLAPECSIS) constitute a mitochondrion transit peptide.

The protein belongs to the mitochondrion-specific ribosomal protein mL53 family.

It localises to the mitochondrion. The polypeptide is Large ribosomal subunit protein mL53 (mrpl53) (Dictyostelium discoideum (Social amoeba)).